The chain runs to 301 residues: Ribosomal RNA large subunit methyltransferase F (301 aa).

Belongs to the methyltransferase superfamily. METTL16/RlmF family.

The protein resides in the cytoplasm. It catalyses the reaction adenosine(1618) in 23S rRNA + S-adenosyl-L-methionine = N(6)-methyladenosine(1618) in 23S rRNA + S-adenosyl-L-homocysteine + H(+). Its function is as follows. Specifically methylates the adenine in position 1618 of 23S rRNA. This is Ribosomal RNA large subunit methyltransferase F from Colwellia psychrerythraea (strain 34H / ATCC BAA-681) (Vibrio psychroerythus).